Consider the following 444-residue polypeptide: ATP-dependent protease ATPase subunit HslU (444 aa).

ATP contacts are provided by residues Ile-20 and 62–67; that span reads GVGKTE. The interval 130–158 is disordered; that stretch reads EDRILDALVPPPRGASGEPERGEDNSARQ. Positions 257, 322, and 394 each coordinate ATP.

The protein belongs to the ClpX chaperone family. HslU subfamily. A double ring-shaped homohexamer of HslV is capped on each side by a ring-shaped HslU homohexamer. The assembly of the HslU/HslV complex is dependent on binding of ATP.

Its subcellular location is the cytoplasm. In terms of biological role, ATPase subunit of a proteasome-like degradation complex; this subunit has chaperone activity. The binding of ATP and its subsequent hydrolysis by HslU are essential for unfolding of protein substrates subsequently hydrolyzed by HslV. HslU recognizes the N-terminal part of its protein substrates and unfolds these before they are guided to HslV for hydrolysis. This is ATP-dependent protease ATPase subunit HslU from Bordetella pertussis (strain Tohama I / ATCC BAA-589 / NCTC 13251).